The primary structure comprises 95 residues: Aspartyl/glutamyl-tRNA(Asn/Gln) amidotransferase subunit C (95 aa).

Belongs to the GatC family. As to quaternary structure, heterotrimer of A, B and C subunits.

The enzyme catalyses L-glutamyl-tRNA(Gln) + L-glutamine + ATP + H2O = L-glutaminyl-tRNA(Gln) + L-glutamate + ADP + phosphate + H(+). It carries out the reaction L-aspartyl-tRNA(Asn) + L-glutamine + ATP + H2O = L-asparaginyl-tRNA(Asn) + L-glutamate + ADP + phosphate + 2 H(+). In terms of biological role, allows the formation of correctly charged Asn-tRNA(Asn) or Gln-tRNA(Gln) through the transamidation of misacylated Asp-tRNA(Asn) or Glu-tRNA(Gln) in organisms which lack either or both of asparaginyl-tRNA or glutaminyl-tRNA synthetases. The reaction takes place in the presence of glutamine and ATP through an activated phospho-Asp-tRNA(Asn) or phospho-Glu-tRNA(Gln). The sequence is that of Aspartyl/glutamyl-tRNA(Asn/Gln) amidotransferase subunit C from Methylococcus capsulatus (strain ATCC 33009 / NCIMB 11132 / Bath).